The following is a 131-amino-acid chain: Small ribosomal subunit protein eS6 (131 aa).

Belongs to the eukaryotic ribosomal protein eS6 family.

The polypeptide is Small ribosomal subunit protein eS6 (Halobacterium salinarum (strain ATCC 29341 / DSM 671 / R1)).